The sequence spans 333 residues: Holliday junction branch migration complex subunit RuvB (333 aa).

The large ATPase domain (RuvB-L) stretch occupies residues Met-1–Tyr-182. Residues Leu-21, Arg-22, Gly-63, Lys-66, Thr-67, Thr-68, Glu-129–Tyr-131, Arg-172, Tyr-182, and Arg-219 each bind ATP. Thr-67 contributes to the Mg(2+) binding site. The small ATPAse domain (RuvB-S) stretch occupies residues Thr-183 to Gln-253. The head domain (RuvB-H) stretch occupies residues Arg-256–Gln-333. DNA is bound by residues Arg-311 and Arg-316.

Belongs to the RuvB family. As to quaternary structure, homohexamer. Forms an RuvA(8)-RuvB(12)-Holliday junction (HJ) complex. HJ DNA is sandwiched between 2 RuvA tetramers; dsDNA enters through RuvA and exits via RuvB. An RuvB hexamer assembles on each DNA strand where it exits the tetramer. Each RuvB hexamer is contacted by two RuvA subunits (via domain III) on 2 adjacent RuvB subunits; this complex drives branch migration. In the full resolvosome a probable DNA-RuvA(4)-RuvB(12)-RuvC(2) complex forms which resolves the HJ.

It localises to the cytoplasm. It carries out the reaction ATP + H2O = ADP + phosphate + H(+). In terms of biological role, the RuvA-RuvB-RuvC complex processes Holliday junction (HJ) DNA during genetic recombination and DNA repair, while the RuvA-RuvB complex plays an important role in the rescue of blocked DNA replication forks via replication fork reversal (RFR). RuvA specifically binds to HJ cruciform DNA, conferring on it an open structure. The RuvB hexamer acts as an ATP-dependent pump, pulling dsDNA into and through the RuvAB complex. RuvB forms 2 homohexamers on either side of HJ DNA bound by 1 or 2 RuvA tetramers; 4 subunits per hexamer contact DNA at a time. Coordinated motions by a converter formed by DNA-disengaged RuvB subunits stimulates ATP hydrolysis and nucleotide exchange. Immobilization of the converter enables RuvB to convert the ATP-contained energy into a lever motion, pulling 2 nucleotides of DNA out of the RuvA tetramer per ATP hydrolyzed, thus driving DNA branch migration. The RuvB motors rotate together with the DNA substrate, which together with the progressing nucleotide cycle form the mechanistic basis for DNA recombination by continuous HJ branch migration. Branch migration allows RuvC to scan DNA until it finds its consensus sequence, where it cleaves and resolves cruciform DNA. In Geobacillus sp. (strain WCH70), this protein is Holliday junction branch migration complex subunit RuvB.